The sequence spans 296 residues: Bifunctional protein FolD 1/3 (296 aa).

NADP(+) contacts are provided by residues 166-168, Ser191, and Ile232; that span reads GRS.

It belongs to the tetrahydrofolate dehydrogenase/cyclohydrolase family. As to quaternary structure, homodimer.

It carries out the reaction (6R)-5,10-methylene-5,6,7,8-tetrahydrofolate + NADP(+) = (6R)-5,10-methenyltetrahydrofolate + NADPH. It catalyses the reaction (6R)-5,10-methenyltetrahydrofolate + H2O = (6R)-10-formyltetrahydrofolate + H(+). It functions in the pathway one-carbon metabolism; tetrahydrofolate interconversion. In terms of biological role, catalyzes the oxidation of 5,10-methylenetetrahydrofolate to 5,10-methenyltetrahydrofolate and then the hydrolysis of 5,10-methenyltetrahydrofolate to 10-formyltetrahydrofolate. This Ruegeria pomeroyi (strain ATCC 700808 / DSM 15171 / DSS-3) (Silicibacter pomeroyi) protein is Bifunctional protein FolD 1/3.